Here is a 234-residue protein sequence, read N- to C-terminus: bZIP transcription factor 1 (234 aa).

Residues 67 to 134 (RAQSDGSNAL…DKQRNAQQQL (68 aa)) are disordered. A compositionally biased stretch (polar residues) spans 70–86 (SDGSNALLSSIGPSGTT). Residues 88–128 (RPRDEMDCFTDTHKHKRGDGNKSRRREQCRANQARYRDKQR) show a composition bias toward basic and acidic residues. One can recognise a bZIP domain in the interval 106-169 (DGNKSRRREQ…RTNQSPWNTV (64 aa)). The tract at residues 109–128 (KSRRREQCRANQARYRDKQR) is basic motif. Positions 134 to 155 (LERSVEQLQSELSTLKHRNLDL) are leucine-zipper.

This sequence belongs to the bZIP family. Interacts with PKZ1.

It localises to the nucleus. Functionally, required for normal zoospore movement, formation of appressoria by germinated zoospore cysts and plant infection. The sequence is that of bZIP transcription factor 1 from Phytophthora infestans (Potato late blight agent).